Reading from the N-terminus, the 715-residue chain is Lanosterol synthase erg7B (715 aa).

The PFTB 1 repeat unit spans residues 111 to 153 (AIEIKNYLMARANPVDGGWGLHSEGDSSVFGTSLNYTVLRLLG). D445 acts as the Proton donor in catalysis. 2 PFTB repeats span residues 550 to 590 (IQRG…RSAG) and 599 to 640 (VRRG…VVQT).

It belongs to the terpene cyclase/mutase family.

The protein resides in the lipid droplet. The protein localises to the endoplasmic reticulum membrane. It catalyses the reaction (S)-2,3-epoxysqualene = lanosterol. It functions in the pathway steroid metabolism; ergosterol biosynthesis. Functionally, lanosterol synthase; part of the third module of ergosterol biosynthesis pathway that includes the late steps of the pathway. ERG7A and ERG7B catalyze the cyclization of (S)-2,3 oxidosqualene to lanosterol, a reaction that forms the sterol core. The third module or late pathway involves the ergosterol synthesis itself through consecutive reactions that mainly occur in the endoplasmic reticulum (ER) membrane. Firstly, the squalene synthase erg9 catalyzes the condensation of 2 farnesyl pyrophosphate moieties to form squalene, which is the precursor of all steroids. Squalene synthase is crucial for balancing the incorporation of farnesyl diphosphate (FPP) into sterol and nonsterol isoprene synthesis. Secondly, squalene is converted into lanosterol by the consecutive action of the squalene epoxidase erg1 and the lanosterol synthase erg7. Then, the delta(24)-sterol C-methyltransferase erg6 methylates lanosterol at C-24 to produce eburicol. Eburicol is the substrate of the sterol 14-alpha demethylase encoded by cyp51A and cyp51B, to yield 4,4,24-trimethyl ergosta-8,14,24(28)-trienol. The C-14 reductase erg24 then reduces the C14=C15 double bond which leads to 4,4-dimethylfecosterol. A sequence of further demethylations at C-4, involving the C-4 demethylation complex containing the C-4 methylsterol oxidases erg25A or erg25B, the sterol-4-alpha-carboxylate 3-dehydrogenase erg26 and the 3-keto-steroid reductase erg27, leads to the production of fecosterol via 4-methylfecosterol. The C-8 sterol isomerase erg2 then catalyzes the reaction which results in unsaturation at C-7 in the B ring of sterols and thus converts fecosterol to episterol. The sterol-C5-desaturase erg3B then catalyzes the introduction of a C-5 double bond in the B ring to produce 5-dehydroepisterol. The 2 other sterol-C5-desaturases, erg3A and erg3C, seem to be less important in ergosterol biosynthesis. The C-22 sterol desaturase erg5 further converts 5-dehydroepisterol into ergosta-5,7,22,24(28)-tetraen-3beta-ol by forming the C-22(23) double bond in the sterol side chain. Finally, ergosta-5,7,22,24(28)-tetraen-3beta-ol is substrate of the C-24(28) sterol reductases erg4A and erg4B to produce ergosterol. Possible alternative sterol biosynthetic pathways might exist from fecosterol to ergosterol, depending on the activities of the erg3 isoforms. This is Lanosterol synthase erg7B from Aspergillus fumigatus (strain ATCC MYA-4609 / CBS 101355 / FGSC A1100 / Af293) (Neosartorya fumigata).